Consider the following 448-residue polypeptide: Probable D-serine dehydratase (448 aa).

Position 111 is an N6-(pyridoxal phosphate)lysine (K111).

It belongs to the serine/threonine dehydratase family. DsdA subfamily. Requires pyridoxal 5'-phosphate as cofactor.

The enzyme catalyses D-serine = pyruvate + NH4(+). This Rhizobium etli (strain CIAT 652) protein is Probable D-serine dehydratase.